Reading from the N-terminus, the 394-residue chain is Phosphopentomutase (394 aa).

Mn(2+)-binding residues include Asp-13, Asp-286, His-291, Asp-327, His-328, and His-339.

This sequence belongs to the phosphopentomutase family. The cofactor is Mn(2+).

The protein resides in the cytoplasm. The enzyme catalyses 2-deoxy-alpha-D-ribose 1-phosphate = 2-deoxy-D-ribose 5-phosphate. It catalyses the reaction alpha-D-ribose 1-phosphate = D-ribose 5-phosphate. It participates in carbohydrate degradation; 2-deoxy-D-ribose 1-phosphate degradation; D-glyceraldehyde 3-phosphate and acetaldehyde from 2-deoxy-alpha-D-ribose 1-phosphate: step 1/2. Functionally, isomerase that catalyzes the conversion of deoxy-ribose 1-phosphate (dRib-1-P) and ribose 1-phosphate (Rib-1-P) to deoxy-ribose 5-phosphate (dRib-5-P) and ribose 5-phosphate (Rib-5-P), respectively. In Bacillus mycoides (strain KBAB4) (Bacillus weihenstephanensis), this protein is Phosphopentomutase.